A 1616-amino-acid chain; its full sequence is DNA (cytosine-5)-methyltransferase 1 (1616 aa).

The interval 1 to 120 (MPARTAPARV…NQARSEARRV (120 aa)) is interaction with DMAP1. The segment at 1-148 (MPARTAPARV…RRSKSDGEAK (148 aa)) is interaction with DNMT3A. 2 interaction with the PRC2/EED-EZH2 complex regions span residues 1–336 (MPAR…TEKK) and 308–606 (NPQI…TIRH). The DMAP1-binding domain occupies 16 to 109 (PAISLPDDVR…NREVNGRLEN (94 aa)). An N6,N6-dimethyllysine modification is found at Lys70. Residues 103-349 (VNGRLENGNQ…AKTVMNSKTH (247 aa)) are disordered. Ser127 and Ser133 each carry phosphoserine. At Thr137 the chain carries Phosphothreonine. Ser141 carries the post-translational modification Phosphoserine. Lys142 is subject to N6-methyllysine; by SETD7. Ser143 is subject to Phosphoserine; by PKB/AKT1. An interaction with DNMT3B region spans residues 149 to 217 (PEPSPSPRIT…TSRERVARPL (69 aa)). Residues Ser152 and Ser154 each carry the phosphoserine modification. Lys160 carries the N6-acetyllysine modification. Residues 163–174 (RQTTITSHFAKG) form an interaction with PCNA region. Residue Thr166 is modified to Phosphothreonine. 2 positions are modified to N6-acetyllysine: Lys173 and Lys188. The short motif at 177-205 (KRKPQEESERAKSDESIKEEDKDQDEKRR) is the Nuclear localization signal element. Composition is skewed to basic and acidic residues over residues 179-214 (KPQE…ERVA), 221-267 (EPER…REAR), and 281-306 (KDEK…EPEK). An N6-acetyllysine; alternate modification is found at Lys259. Lys259 participates in a covalent cross-link: Glycyl lysine isopeptide (Lys-Gly) (interchain with G-Cter in SUMO2); alternate. The interval 310–502 (QISDEKDEDE…PEYAPIFGLM (193 aa)) is homodimerization. A Phosphoserine modification is found at Ser312. A compositionally biased stretch (basic and acidic residues) spans 321 to 337 (EEKRRKTTPKEPTEKKM). Residues 331–550 (EPTEKKMARA…NLNRFTEDSL (220 aa)) form a DNA replication foci-targeting sequence region. Positions 353 and 356 each coordinate Zn(2+). Residue Lys366 is modified to N6-acetyllysine. Phosphoserine is present on residues Ser394 and Ser398. 2 residues coordinate Zn(2+): Cys414 and His418. A phosphoserine mark is found at Ser509 and Ser549. The segment at 646 to 692 (NAFKRRRCGVCEVCQQPECGKCKACKDMVKFGGSGRSKQACQERRCP) adopts a CXXC-type zinc-finger fold. A required for activity region spans residues 651–697 (RRCGVCEVCQQPECGKCKACKDMVKFGGSGRSKQACQERRCPNMAMK). Zn(2+) contacts are provided by Cys653, Cys656, Cys659, Cys664, Cys667, Cys670, Cys686, and Cys691. The autoinhibitory linker stretch occupies residues 693-754 (NMAMKEADDD…SYYKKVCIDA (62 aa)). Residues 699–709 (ADDDEEVDDNI) are compositionally biased toward acidic residues. Residues 699–729 (ADDDEEVDDNIPEMPSPKKMHQGKKKKQNKN) are disordered. Ser714 carries the post-translational modification Phosphoserine. Basic residues predominate over residues 716 to 728 (KKMHQGKKKKQNK). The residue at position 732 (Ser732) is a Phosphoserine. At Lys749 the chain carries N6-acetyllysine. The region spanning 755–880 (ETLEVGDCVS…QDYARFESPP (126 aa)) is the BAH 1 domain. Phosphoserine is present on Ser878. N6-acetyllysine is present on residues Lys891, Lys957, Lys961, Lys975, and Lys1054. A BAH 2 domain is found at 972–1100 (HYRKYSDYIK…AKSKSFEDPP (129 aa)). A disordered region spans residues 1095 to 1130 (SFEDPPNHARSPGNKGKGKGKGKGKPKSQACEPSEP). A run of 5 repeats spans residues 1109–1110 (KG), 1111–1112 (KG), 1113–1114 (KG), 1115–1116 (KG), and 1117–1118 (KG). Residues 1109–1120 (KGKGKGKGKGKP) are 6 X 2 AA tandem repeats of K-G. Positions 1110 to 1120 (GKGKGKGKGKP) are enriched in basic residues. Lys1111, Lys1113, and Lys1115 each carry N6-acetyllysine. At Lys1117 the chain carries N6-acetyllysine; by EHMT2. An N6-acetyllysine mark is found at Lys1119 and Lys1121. One copy of the 6; approximate repeat lies at 1119–1120 (KP). The interval 1121-1616 (KSQACEPSEP…KIKEEEAAKD (496 aa)) is interaction with the PRC2/EED-EZH2 complex. The region spanning 1139 to 1599 (LRTLDVFSGC…LEIKLCMLAK (461 aa)) is the SAM-dependent MTase C5-type domain. Residues 1139–1616 (LRTLDVFSGC…KIKEEEAAKD (478 aa)) form a catalytic region. S-adenosyl-L-methionine is bound by residues Ser1146, 1150–1151 (GL), 1168–1169 (EM), 1190–1191 (DC), and Cys1191. Residue Cys1226 is part of the active site. An N6-acetyllysine mark is found at Lys1349 and Lys1415. S-adenosyl-L-methionine-binding residues include Asn1578 and Val1580. Lys1609 is covalently cross-linked (Glycyl lysine isopeptide (Lys-Gly) (interchain with G-Cter in SUMO2)).

The protein belongs to the class I-like SAM-binding methyltransferase superfamily. C5-methyltransferase family. Homodimer. Forms a stable complex with E2F1, BB1 and HDAC1. Forms a complex with DMAP1 and HDAC2, with direct interaction. Interacts with the PRC2/EED-EZH2 complex. Probably part of a corepressor complex containing ZNF304, TRIM28, SETDB1 and DNMT1. Interacts with UHRF1; promoting its recruitment to hemimethylated DNA. Interacts with USP7, promoting its deubiquitination. Interacts with PCNA. Interacts with MBD2 and MBD3. Interacts with DNMT3A and DNMT3B. Interacts with UBC9. Interacts with CSNK1D. Interacts with HDAC1. Interacts with BAZ2A/TIP5. Interacts with SIRT7. Interacts with ZNF263; recruited to the SIX3 promoter along with other proteins involved in chromatin modification and transcriptional corepression where it contributes to transcriptional repression. Interacts with L3MBTL3 and DCAF5; the interaction requires DNMT1 methylation at Lys-142 and is necessary to target DNMT1 for ubiquitination by the CRL4-DCAF5 E3 ubiquitin ligase complex and proteasomal degradation. Interacts with PHF20L1; the interaction requires DNMT1 methylation at Lys-142 and protects DNMT1 from ubiquitination and proteasomal degradation. Sumoylated; sumoylation increases activity. Post-translationally, acetylation on multiple lysines, mainly by KAT2B/PCAF, regulates cell cycle G(2)/M transition. Deacetylation of Lys-1349 and Lys-1415 by SIRT1 increases methyltransferase activity. In terms of processing, phosphorylation of Ser-154 by CDKs is important for enzymatic activity and protein stability. Phosphorylation of Ser-143 by AKT1 prevents methylation by SETD7 thereby increasing DNMT1 stability. Methylation at Lys-142 by SETD7 is necessary for the regulation of DNMT1 proteasomal degradation. Post-translationally, ubiquitinated by UHRF1; interaction with USP7 counteracts ubiquitination by UHRF1 by promoting deubiquitination and preventing degradation by the proteasome. As to expression, ubiquitous; highly expressed in fetal tissues, heart, kidney, placenta, peripheral blood mononuclear cells, and expressed at lower levels in spleen, lung, brain, small intestine, colon, liver, and skeletal muscle. Isoform 2 is less expressed than isoform 1.

The protein localises to the nucleus. The catalysed reaction is a 2'-deoxycytidine in DNA + S-adenosyl-L-methionine = a 5-methyl-2'-deoxycytidine in DNA + S-adenosyl-L-homocysteine + H(+). Its function is as follows. Methylates CpG residues. Preferentially methylates hemimethylated DNA. Associates with DNA replication sites in S phase maintaining the methylation pattern in the newly synthesized strand, that is essential for epigenetic inheritance. Associates with chromatin during G2 and M phases to maintain DNA methylation independently of replication. It is responsible for maintaining methylation patterns established in development. DNA methylation is coordinated with methylation of histones. Mediates transcriptional repression by direct binding to HDAC2. In association with DNMT3B and via the recruitment of CTCFL/BORIS, involved in activation of BAG1 gene expression by modulating dimethylation of promoter histone H3 at H3K4 and H3K9. Probably forms a corepressor complex required for activated KRAS-mediated promoter hypermethylation and transcriptional silencing of tumor suppressor genes (TSGs) or other tumor-related genes in colorectal cancer (CRC) cells. Also required to maintain a transcriptionally repressive state of genes in undifferentiated embryonic stem cells (ESCs). Associates at promoter regions of tumor suppressor genes (TSGs) leading to their gene silencing. Promotes tumor growth. The sequence is that of DNA (cytosine-5)-methyltransferase 1 (DNMT1) from Homo sapiens (Human).